The primary structure comprises 199 residues: Ribonuclease HII (199 aa).

The RNase H type-2 domain maps to 14-199 (GLLAGVDEAG…SFAPVAEVLR (186 aa)). A divalent metal cation-binding residues include Asp20, Glu21, and Asp112.

The protein belongs to the RNase HII family. It depends on Mn(2+) as a cofactor. Requires Mg(2+) as cofactor.

Its subcellular location is the cytoplasm. It carries out the reaction Endonucleolytic cleavage to 5'-phosphomonoester.. Functionally, endonuclease that specifically degrades the RNA of RNA-DNA hybrids. The polypeptide is Ribonuclease HII (Polaromonas sp. (strain JS666 / ATCC BAA-500)).